A 153-amino-acid chain; its full sequence is Histone H2B.3 (153 aa).

Basic and acidic residues-rich tracts occupy residues 1 to 10 (MAPKKDEKPA) and 20 to 54 (AKAE…GEKK). Positions 1 to 60 (MAPKKDEKPATAEAGAEAPAKAEAKPKAEKAGKKAKKEPAKKAAKEPKGDGEKKDKKKKK) are disordered. N6-acetyllysine is present on residues Lys41 and Lys42. Residue Lys149 forms a Glycyl lysine isopeptide (Lys-Gly) (interchain with G-Cter in ubiquitin) linkage.

This sequence belongs to the histone H2B family. In terms of assembly, the nucleosome is a histone octamer containing two molecules each of H2A, H2B, H3 and H4 assembled in one H3-H4 heterotetramer and two H2A-H2B heterodimers. The octamer wraps approximately 147 bp of DNA. Post-translationally, the N-terminus is blocked. Can be acetylated to form H2BK33ac and H2BK34ac. Acetylated mainly on the ubiquitinated form. In terms of processing, monoubiquitinated to form H2BK143ub1; which is increased during the light period and may give a specific tag for epigenetic transcriptional activation.

The protein localises to the nucleus. Its subcellular location is the chromosome. Functionally, core component of nucleosome. Nucleosomes wrap and compact DNA into chromatin, limiting DNA accessibility to the cellular machineries which require DNA as a template. Histones thereby play a central role in transcription regulation, DNA repair, DNA replication and chromosomal stability. DNA accessibility is regulated via a complex set of post-translational modifications of histones, also called histone code, and nucleosome remodeling. The polypeptide is Histone H2B.3 (Chlamydomonas reinhardtii (Chlamydomonas smithii)).